The sequence spans 397 residues: Serpin B10 (397 aa).

Positions 74-77 (KKRK) match the Nuclear localization signal motif.

This sequence belongs to the serpin family. Ov-serpin subfamily. Expressed in many tissues, including brain, heart, kidney, liver, lung, prostate, skin, spleen and stomach.

It localises to the nucleus. Its subcellular location is the cytoplasm. Its function is as follows. Protease inhibitor that may play a role in the regulation of protease activities during hematopoiesis and apoptosis induced by TNF. May regulate protease activities in the cytoplasm and in the nucleus. Inhibits plasmin. The sequence is that of Serpin B10 (Serpinb10) from Rattus norvegicus (Rat).